A 165-amino-acid chain; its full sequence is UPF0303 protein Bxeno_A1932 (165 aa).

Belongs to the UPF0303 family.

The sequence is that of UPF0303 protein Bxeno_A1932 from Paraburkholderia xenovorans (strain LB400).